A 325-amino-acid chain; its full sequence is Pyruvate dehydrogenase E1 component subunit beta (325 aa).

Position 59 (E59) interacts with thiamine diphosphate.

Heterodimer of an alpha and a beta chain. Thiamine diphosphate serves as cofactor.

It carries out the reaction N(6)-[(R)-lipoyl]-L-lysyl-[protein] + pyruvate + H(+) = N(6)-[(R)-S(8)-acetyldihydrolipoyl]-L-lysyl-[protein] + CO2. The pyruvate dehydrogenase complex catalyzes the overall conversion of pyruvate to acetyl-CoA and CO(2). It contains multiple copies of three enzymatic components: pyruvate dehydrogenase (E1), dihydrolipoamide acetyltransferase (E2) and lipoamide dehydrogenase (E3). The sequence is that of Pyruvate dehydrogenase E1 component subunit beta (pdhB) from Rickettsia bellii (strain RML369-C).